A 155-amino-acid polypeptide reads, in one-letter code: Cyclic pyranopterin monophosphate synthase (155 aa).

Substrate is bound by residues 75-77 and 111-112; these read LCH and ME. Residue aspartate 126 is part of the active site.

The protein belongs to the MoaC family. As to quaternary structure, homohexamer; trimer of dimers.

It carries out the reaction (8S)-3',8-cyclo-7,8-dihydroguanosine 5'-triphosphate = cyclic pyranopterin phosphate + diphosphate. Its pathway is cofactor biosynthesis; molybdopterin biosynthesis. In terms of biological role, catalyzes the conversion of (8S)-3',8-cyclo-7,8-dihydroguanosine 5'-triphosphate to cyclic pyranopterin monophosphate (cPMP). This chain is Cyclic pyranopterin monophosphate synthase, found in Corynebacterium efficiens (strain DSM 44549 / YS-314 / AJ 12310 / JCM 11189 / NBRC 100395).